A 445-amino-acid chain; its full sequence is Phosphoglucosamine mutase (445 aa).

Ser-99 (phosphoserine intermediate) is an active-site residue. Mg(2+) contacts are provided by Ser-99, Asp-242, Asp-244, and Asp-246. Ser-99 is subject to Phosphoserine.

Belongs to the phosphohexose mutase family. Mg(2+) is required as a cofactor. Post-translationally, activated by phosphorylation.

It catalyses the reaction alpha-D-glucosamine 1-phosphate = D-glucosamine 6-phosphate. Its function is as follows. Catalyzes the conversion of glucosamine-6-phosphate to glucosamine-1-phosphate. The sequence is that of Phosphoglucosamine mutase from Sulfurovum sp. (strain NBC37-1).